We begin with the raw amino-acid sequence, 129 residues long: Small ribosomal subunit protein uS9 (129 aa).

A disordered region spans residues 97-129 (LKAQGFLTRDPRKKERKKYGRKKARKSFQFSKR). Residues 110–129 (KERKKYGRKKARKSFQFSKR) are compositionally biased toward basic residues.

It belongs to the universal ribosomal protein uS9 family.

The polypeptide is Small ribosomal subunit protein uS9 (Chlamydia trachomatis serovar A (strain ATCC VR-571B / DSM 19440 / HAR-13)).